The chain runs to 86 residues: Anti-adapter protein IraP (86 aa).

Residues 1–36 adopt a coiled-coil conformation; sequence MKNLIAELLFKLAQKEEESKELCAQVEALEIIVTAM.

It belongs to the IraP family. In terms of assembly, interacts with RssB.

The protein resides in the cytoplasm. Its function is as follows. Inhibits RpoS proteolysis by regulating RssB activity, thereby increasing the stability of the sigma stress factor RpoS especially during phosphate starvation, but also in stationary phase and during nitrogen starvation. Its effect on RpoS stability is due to its interaction with RssB, which probably blocks the interaction of RssB with RpoS, and the consequent delivery of the RssB-RpoS complex to the ClpXP protein degradation pathway. The polypeptide is Anti-adapter protein IraP (Escherichia coli O127:H6 (strain E2348/69 / EPEC)).